The primary structure comprises 258 residues: Deoxyribose-phosphate aldolase (258 aa).

Aspartate 102 functions as the Proton donor/acceptor in the catalytic mechanism. Lysine 165 serves as the catalytic Schiff-base intermediate with acetaldehyde. Lysine 199 serves as the catalytic Proton donor/acceptor.

It belongs to the DeoC/FbaB aldolase family. DeoC type 2 subfamily.

It localises to the cytoplasm. It carries out the reaction 2-deoxy-D-ribose 5-phosphate = D-glyceraldehyde 3-phosphate + acetaldehyde. The protein operates within carbohydrate degradation; 2-deoxy-D-ribose 1-phosphate degradation; D-glyceraldehyde 3-phosphate and acetaldehyde from 2-deoxy-alpha-D-ribose 1-phosphate: step 2/2. Functionally, catalyzes a reversible aldol reaction between acetaldehyde and D-glyceraldehyde 3-phosphate to generate 2-deoxy-D-ribose 5-phosphate. In Aliivibrio salmonicida (strain LFI1238) (Vibrio salmonicida (strain LFI1238)), this protein is Deoxyribose-phosphate aldolase.